Consider the following 224-residue polypeptide: DNA mismatch repair protein MutH (224 aa).

This sequence belongs to the MutH family.

It localises to the cytoplasm. Sequence-specific endonuclease that cleaves unmethylated GATC sequences. It is involved in DNA mismatch repair. The chain is DNA mismatch repair protein MutH from Shewanella amazonensis (strain ATCC BAA-1098 / SB2B).